Consider the following 133-residue polypeptide: Profilin (133 aa).

This sequence belongs to the profilin family.

More likely to influence phosphoinositide metabolism than actin assembly. In Camelus, this protein is Profilin.